A 90-amino-acid chain; its full sequence is MARVAVVVKVYPDDVSIDPKTLAERIKSKLPSGYEVLAEGEEPIAFGLKALKLVIAMNEDTEGGTEEVEQLLKNIEGVQEVEVENVSRMQ.

Belongs to the EF-1-beta/EF-1-delta family.

Promotes the exchange of GDP for GTP in EF-1-alpha/GDP, thus allowing the regeneration of EF-1-alpha/GTP that could then be used to form the ternary complex EF-1-alpha/GTP/AAtRNA. This Aeropyrum pernix (strain ATCC 700893 / DSM 11879 / JCM 9820 / NBRC 100138 / K1) protein is Elongation factor 1-beta (ef1b).